The chain runs to 241 residues: Large ribosomal subunit protein uL2 (241 aa).

Over residues 1-12 the composition is skewed to basic residues; sequence MGKRLISQRRGR. Disordered regions lie at residues 1 to 21 and 200 to 241; these read MGKR…RSAS and AVDH…GKRR.

The protein belongs to the universal ribosomal protein uL2 family. Part of the 50S ribosomal subunit. Forms a bridge to the 30S subunit in the 70S ribosome.

Functionally, one of the primary rRNA binding proteins. Required for association of the 30S and 50S subunits to form the 70S ribosome, for tRNA binding and peptide bond formation. It has been suggested to have peptidyltransferase activity; this is somewhat controversial. Makes several contacts with the 16S rRNA in the 70S ribosome. This Methanothermobacter thermautotrophicus (strain ATCC 29096 / DSM 1053 / JCM 10044 / NBRC 100330 / Delta H) (Methanobacterium thermoautotrophicum) protein is Large ribosomal subunit protein uL2.